The chain runs to 47 residues: Photosystem II reaction center protein K (47 aa).

The propeptide occupies 1–10 (MAPLTLDLLA). A helical membrane pass occupies residues 26-46 (LPLIPLLFFLLVFVWQAAVGF).

Belongs to the PsbK family. PSII is composed of 1 copy each of membrane proteins PsbA, PsbB, PsbC, PsbD, PsbE, PsbF, PsbH, PsbI, PsbJ, PsbK, PsbL, PsbM, PsbT, PsbX, PsbY, Psb30/Ycf12, peripheral proteins PsbO, CyanoQ (PsbQ), PsbU, PsbV and a large number of cofactors. It forms dimeric complexes.

It is found in the cellular thylakoid membrane. Its function is as follows. One of the components of the core complex of photosystem II (PSII). PSII is a light-driven water:plastoquinone oxidoreductase that uses light energy to abstract electrons from H(2)O, generating O(2) and a proton gradient subsequently used for ATP formation. It consists of a core antenna complex that captures photons, and an electron transfer chain that converts photonic excitation into a charge separation. The sequence is that of Photosystem II reaction center protein K from Prochlorococcus marinus (strain SARG / CCMP1375 / SS120).